Consider the following 378-residue polypeptide: Erythronate-4-phosphate dehydrogenase (378 aa).

2 residues coordinate substrate: Ser45 and Thr66. 2 residues coordinate NAD(+): Asp146 and Thr175. Arg208 is an active-site residue. Residue Asp232 participates in NAD(+) binding. Glu237 is a catalytic residue. Residue His254 is the Proton donor of the active site. Gly257 contacts NAD(+). Position 258 (Tyr258) interacts with substrate.

The protein belongs to the D-isomer specific 2-hydroxyacid dehydrogenase family. PdxB subfamily. As to quaternary structure, homodimer.

The protein localises to the cytoplasm. The catalysed reaction is 4-phospho-D-erythronate + NAD(+) = (R)-3-hydroxy-2-oxo-4-phosphooxybutanoate + NADH + H(+). It functions in the pathway cofactor biosynthesis; pyridoxine 5'-phosphate biosynthesis; pyridoxine 5'-phosphate from D-erythrose 4-phosphate: step 2/5. Catalyzes the oxidation of erythronate-4-phosphate to 3-hydroxy-2-oxo-4-phosphonooxybutanoate. The sequence is that of Erythronate-4-phosphate dehydrogenase from Escherichia coli O6:H1 (strain CFT073 / ATCC 700928 / UPEC).